Consider the following 292-residue polypeptide: Imipenem-hydrolyzing beta-lactamase (292 aa).

Residues 1-27 (MSLNVKQSRIAILFSSCLISISFFSQA) form the signal peptide. Cys70 and Cys240 are joined by a disulfide. The active-site Acyl-ester intermediate is the Ser71. 236 to 238 (KTG) lines the substrate pocket.

Belongs to the class-A beta-lactamase family.

It catalyses the reaction a beta-lactam + H2O = a substituted beta-amino acid. In terms of biological role, hydrolyzes carbapenems such as imipenem, which are extended-spectrum beta-lactam antibiotics. This chain is Imipenem-hydrolyzing beta-lactamase (nmcA), found in Enterobacter cloacae.